Reading from the N-terminus, the 304-residue chain is MGFFDRLKAGLAKTRERLLKAIPWGGNLEEVLEELEMALLAADVGLSATEEILQEVRASGRKDLKEAVKEKLVGMLEPDERRATLRKLGFNPQKPKPVEPKGRVVLVVGVNGVGKTTTIAKLGRYYQNLGKKVMFCAGDTFRAAGGTQLSEWGKRLSIPVIQGPEGTDPAALAYDAVQAMKARGYDLLFVDTAGRLHTKHNLMEELKKVKRAIAKADPEEPKEVWLVLDAVTGQNGLEQAKKFHEAVGLTGVIVTKLDGTAKGGVLIPIVRTLKVPIKFVGVGEGPDDLQPFDPEAFVEALLED.

GTP is bound by residues 109–116 (GVNGVGKT), 191–195 (DTAGR), and 255–258 (TKLD).

This sequence belongs to the GTP-binding SRP family. FtsY subfamily. In terms of assembly, part of the signal recognition particle protein translocation system, which is composed of SRP and FtsY. In terms of processing, sensitive to endogenous proteolytic cleavage between residues 18 and 19 and between residues 86 and 87.

Its subcellular location is the cell membrane. The protein resides in the cytoplasm. It carries out the reaction GTP + H2O = GDP + phosphate + H(+). Functionally, involved in targeting and insertion of nascent membrane proteins into the cytoplasmic membrane. Acts as a receptor for the complex formed by the signal recognition particle (SRP) and the ribosome-nascent chain (RNC). The chain is Signal recognition particle receptor FtsY from Thermus aquaticus.